A 920-amino-acid polypeptide reads, in one-letter code: DNA ligase (920 aa).

NAD(+) is bound by residues 90-94 (DAAYD), 139-140 (SL), and glutamate 173. Lysine 175 acts as the N6-AMP-lysine intermediate in catalysis. Residues arginine 196, glutamate 235, lysine 360, and lysine 384 each contribute to the NAD(+) site. Zn(2+) is bound by residues cysteine 481, cysteine 484, cysteine 500, and cysteine 506. Positions 662-691 (GEAAIESAETQGDTASETTGAPTGAEAPLG) are disordered. The span at 669 to 682 (AETQGDTASETTGA) shows a compositional bias: polar residues. The 82-residue stretch at 839–920 (SLPQTLAGKT…FAQLLATGTI (82 aa)) folds into the BRCT domain.

The protein belongs to the NAD-dependent DNA ligase family. LigA subfamily. Requires Mg(2+) as cofactor. It depends on Mn(2+) as a cofactor.

It catalyses the reaction NAD(+) + (deoxyribonucleotide)n-3'-hydroxyl + 5'-phospho-(deoxyribonucleotide)m = (deoxyribonucleotide)n+m + AMP + beta-nicotinamide D-nucleotide.. DNA ligase that catalyzes the formation of phosphodiester linkages between 5'-phosphoryl and 3'-hydroxyl groups in double-stranded DNA using NAD as a coenzyme and as the energy source for the reaction. It is essential for DNA replication and repair of damaged DNA. The polypeptide is DNA ligase (Bifidobacterium longum (strain DJO10A)).